We begin with the raw amino-acid sequence, 381 residues long: DNA dC-&gt;dU-editing enzyme APOBEC-3G (381 aa).

Residues 1–62 (MKPQTRNTVV…ANIFQGQVSF (62 aa)) are essential for cytoplasmic localization. 2 consecutive CMP/dCMP-type deaminase domains span residues 29 to 143 (HRNT…SQTG) and 211 to 325 (GQHQ…LRRL). T32 carries the post-translational modification Phosphothreonine; by PKA. H67, C98, and C101 together coordinate Zn(2+). The necessary for homooligomerization stretch occupies residues 206 to 333 (DPSVLGQHQS…RLDRAGTPIS (128 aa)). The interaction with DNA stretch occupies residues 210–212 (LGQ). Residue H254 coordinates Zn(2+). E256 (proton donor) is an active-site residue. Residues C285 and C288 each contribute to the Zn(2+) site. Residues 310 to 317 (RIYDYQRG) form an interaction with DNA region.

It belongs to the cytidine and deoxycytidylate deaminase family. In terms of assembly, homodimer. Homooligomer. Can bind RNA to form ribonucleoprotein complexes of high-molecular-mass (HMM) or low-molecular-mass (LMM). HMM is inactive and heterogeneous in protein composition because of binding nonselectively to cellular RNAs, which in turn are associated with variety of cellular proteins. The LMM form which is enzymatically active has few or no RNAs associated. Its ability to form homooligomer is distinct from its ability to assemble into HMM. Interacts with APOBEC3B, APOBEC3F, MOV10, AGO2, EIF4E, EIF4ENIF1, DCP2 and DDX6 in an RNA-dependent manner. Interacts with AGO1, AGO3 and PKA/PRKACA. Requires Zn(2+) as cofactor.

It localises to the cytoplasm. The protein resides in the nucleus. It is found in the P-body. The catalysed reaction is a 2'-deoxycytidine in single-stranded DNA + H2O + H(+) = a 2'-deoxyuridine in single-stranded DNA + NH4(+). Its function is as follows. DNA deaminase (cytidine deaminase) which acts as an inhibitor of retrovirus replication and retrotransposon mobility. After the penetration of retroviral nucleocapsids into target cells of infection and the initiation of reverse transcription, it can induce the conversion of cytosine to uracil in the minus-sense single-strand viral DNA, leading to G-to-A hypermutations in the subsequent plus-strand viral DNA. The resultant detrimental levels of mutations in the proviral genome, along with a deamination-independent mechanism that works prior to the proviral integration, together exert efficient antiretroviral effects in infected target cells. Selectively targets single-stranded DNA and does not deaminate double-stranded DNA or single- or double-stranded RNA. This chain is DNA dC-&gt;dU-editing enzyme APOBEC-3G (APOBEC3G), found in Lagothrix lagotricha (Brown woolly monkey).